A 412-amino-acid polypeptide reads, in one-letter code: Tyrosine--tRNA ligase (412 aa).

Residues 48 to 57 (PSRPDLHLGH) carry the 'HIGH' region motif. The 'KMSKS' region signature appears at 232 to 236 (KMSKS). Lysine 235 contacts ATP. One can recognise an S4 RNA-binding domain in the interval 342–405 (VGLLNLMRHA…GKRRFARIRP (64 aa)).

Belongs to the class-I aminoacyl-tRNA synthetase family. TyrS type 2 subfamily. Homodimer.

It localises to the cytoplasm. The enzyme catalyses tRNA(Tyr) + L-tyrosine + ATP = L-tyrosyl-tRNA(Tyr) + AMP + diphosphate + H(+). Its function is as follows. Catalyzes the attachment of tyrosine to tRNA(Tyr) in a two-step reaction: tyrosine is first activated by ATP to form Tyr-AMP and then transferred to the acceptor end of tRNA(Tyr). The sequence is that of Tyrosine--tRNA ligase from Salinibacter ruber (strain DSM 13855 / M31).